The chain runs to 273 residues: 3-methyl-2-oxobutanoate hydroxymethyltransferase (273 aa).

Mg(2+) contacts are provided by D49 and D88. 3-methyl-2-oxobutanoate contacts are provided by residues 49–50 (DS), D88, and K118. E120 contributes to the Mg(2+) binding site. E187 serves as the catalytic Proton acceptor.

It belongs to the PanB family. As to quaternary structure, homodecamer; pentamer of dimers. Mg(2+) serves as cofactor.

The protein resides in the cytoplasm. It carries out the reaction 3-methyl-2-oxobutanoate + (6R)-5,10-methylene-5,6,7,8-tetrahydrofolate + H2O = 2-dehydropantoate + (6S)-5,6,7,8-tetrahydrofolate. It functions in the pathway cofactor biosynthesis; (R)-pantothenate biosynthesis; (R)-pantoate from 3-methyl-2-oxobutanoate: step 1/2. Its function is as follows. Catalyzes the reversible reaction in which hydroxymethyl group from 5,10-methylenetetrahydrofolate is transferred onto alpha-ketoisovalerate to form ketopantoate. The sequence is that of 3-methyl-2-oxobutanoate hydroxymethyltransferase from Rhizobium rhizogenes (strain K84 / ATCC BAA-868) (Agrobacterium radiobacter).